The primary structure comprises 378 residues: tRNA-specific 2-thiouridylase MnmA (378 aa).

ATP-binding positions include 27-34 (AMSGGVDS) and Leu53. Cys121 functions as the Nucleophile in the catalytic mechanism. Cys121 and Cys218 are joined by a disulfide. Gly145 lines the ATP pocket. The tract at residues 168–170 (RDQ) is interaction with tRNA. Cys218 (cysteine persulfide intermediate) is an active-site residue.

It belongs to the MnmA/TRMU family.

It is found in the cytoplasm. It catalyses the reaction S-sulfanyl-L-cysteinyl-[protein] + uridine(34) in tRNA + AH2 + ATP = 2-thiouridine(34) in tRNA + L-cysteinyl-[protein] + A + AMP + diphosphate + H(+). Its function is as follows. Catalyzes the 2-thiolation of uridine at the wobble position (U34) of tRNA, leading to the formation of s(2)U34. The chain is tRNA-specific 2-thiouridylase MnmA from Rhizorhabdus wittichii (strain DSM 6014 / CCUG 31198 / JCM 15750 / NBRC 105917 / EY 4224 / RW1) (Sphingomonas wittichii).